The primary structure comprises 186 residues: Nicotinamidase/pyrazinamidase (186 aa).

Residue Asp-8 is the Proton acceptor of the active site. Asp-49, His-51, His-57, and His-71 together coordinate Fe cation. Lys-96 is a catalytic residue. The active-site Nucleophile is Cys-138.

This sequence belongs to the isochorismatase family. As to quaternary structure, monomer. Mn(2+) serves as cofactor. The cofactor is Fe(2+).

The enzyme catalyses nicotinamide + H2O = nicotinate + NH4(+). It carries out the reaction pyrazinamide + H2O = pyrazine-2-carboxylate + NH4(+). Its pathway is cofactor biosynthesis; nicotinate biosynthesis; nicotinate from nicotinamide: step 1/1. Its activity is regulated as follows. Is inhibited by Cu(2+), Zn(2+) and Fe(3+). In terms of biological role, catalyzes the deamidation of nicotinamide (NAM) into nicotinate. Likely functions in the cyclical salvage pathway for production of NAD from nicotinamide. Its function is as follows. Is involved in the activation of the first-line antituberculous drug pyrazinamide (PZA) by converting it into the active form, pyrazinoic acid. The polypeptide is Nicotinamidase/pyrazinamidase (Mycobacterium tuberculosis (strain ATCC 25618 / H37Rv)).